Reading from the N-terminus, the 453-residue chain is T-box transcription factor T homolog (453 aa).

The T-box DNA-binding region spans 47-217; that stretch reads LWRRFSKLTN…YNPFAKAFLD (171 aa). The disordered stretch occupies residues 283–304; it reads RSHRSTPYPPPPYEQKYSPTSA.

The protein resides in the nucleus. May be involved in the transcriptional regulation of genes required for gastrulation. This is T-box transcription factor T homolog from Patiria pectinifera (Starfish).